A 518-amino-acid chain; its full sequence is Subtilisin-like protease 1 (518 aa).

Positions 1–19 are cleaved as a signal peptide; that stretch reads MGVFRFISISLAAVSAANA. The propeptide occupies 20–116; that stretch reads AQILSMPHAQ…VEPDTIISVH (97 aa). The region spanning 34-115 is the Inhibitor I9 domain; the sequence is SYIVMMKDDT…FVEPDTIISV (82 aa). Residues 126–400 form the Peptidase S8 domain; that stretch reads SWGLARISNP…NVLINNGGAK (275 aa). Residues aspartate 158 and histidine 190 each act as charge relay system in the active site. Residues 175-198 are disordered; the sequence is GSNQVNDGDDRDGSGHGTHTSGTM. 2 N-linked (GlcNAc...) asparagine glycosylation sites follow: asparagine 233 and asparagine 251. Over residues 282-294 the composition is skewed to polar residues; that stretch reads NDNQDAQSSSPAS. Residues 282 to 312 form a disordered region; sequence NDNQDAQSSSPASEPSVCTVGSSAEDDSRSS. The active-site Charge relay system is serine 345. Residues 378 to 394 show a composition bias toward polar residues; that stretch reads TSSITDAGPGTPTNVLI. The tract at residues 378 to 496 is disordered; the sequence is TSSITDAGPG…PYPGGDNFDF (119 aa). Pro residues-rich tracts occupy residues 405-470 and 478-487; these read NPNP…PGEP and APAPQHPHTP.

This sequence belongs to the peptidase S8 family.

It is found in the secreted. In terms of biological role, secreted subtilisin-like serine protease with keratinolytic activity that contributes to pathogenicity. The protein is Subtilisin-like protease 1 (SUB1) of Trichophyton verrucosum (strain HKI 0517).